The primary structure comprises 699 residues: PTS system glucose-specific EIICBA component (699 aa).

Residues 3–424 (KALFGVLQKI…FNLKTPGRED (422 aa)) form the PTS EIIC type-1 domain. The next 11 helical transmembrane spans lie at 16–36 (LMLP…GNAM), 66–86 (IVFD…LANG), 89–109 (VAGI…SAVL), 139–159 (IPTL…AALL), 180–200 (FVPI…LVIW), 233–253 (LIPF…FFSY), 283–303 (FMTG…LAIY), 313–333 (LVAG…ITEP), 338–358 (FLFV…LSFM), 365–385 (VKIG…GILP), and 388–408 (TAWW…YFGF). The region spanning 439-520 (GDLPYEILQA…QDIIAGRKPR (82 aa)) is the PTS EIIB type-1 domain. Catalysis depends on cysteine 461, which acts as the Phosphocysteine intermediate; for EIIB activity. Positions 568-672 (DQVFSGKMMG…SLMTPIVFTN (105 aa)) constitute a PTS EIIA type-1 domain. Histidine 620 (tele-phosphohistidine intermediate; for EIIA activity) is an active-site residue.

It localises to the cell membrane. It catalyses the reaction N(pros)-phospho-L-histidyl-[protein] + D-glucose(out) = D-glucose 6-phosphate(in) + L-histidyl-[protein]. The enzyme catalyses D-glucosamine(out) + N(pros)-phospho-L-histidyl-[protein] = D-glucosamine 6-phosphate(in) + L-histidyl-[protein]. Functionally, the phosphoenolpyruvate-dependent sugar phosphotransferase system (sugar PTS), a major carbohydrate active transport system, catalyzes the phosphorylation of incoming sugar substrates concomitantly with their translocation across the cell membrane. This system is involved in glucose transport. The system can also transport glucosamine. In terms of biological role, in addition, plays an important role in the phosphorylation of EIIA-deficient PTS transporters. The EIIA domain can transfer a phosphoryl group to EIIA-deficient PTS transporters, enabling growth with maltose, N-acetylglucosamine, sucrose or trehalose as the sole carbon source. The sequence is that of PTS system glucose-specific EIICBA component (ptsG) from Bacillus subtilis (strain 168).